The following is a 359-amino-acid chain: Peptide chain release factor 1 (359 aa).

Q236 is modified (N5-methylglutamine).

It belongs to the prokaryotic/mitochondrial release factor family. Methylated by PrmC. Methylation increases the termination efficiency of RF1.

Its subcellular location is the cytoplasm. In terms of biological role, peptide chain release factor 1 directs the termination of translation in response to the peptide chain termination codons UAG and UAA. In Streptococcus pneumoniae (strain Hungary19A-6), this protein is Peptide chain release factor 1.